Here is a 223-residue protein sequence, read N- to C-terminus: ATP-dependent dethiobiotin synthetase BioD (223 aa).

Residue 11–16 coordinates ATP; sequence DIGKTY. T15 contacts Mg(2+). K36 is a catalytic residue. T40 lines the substrate pocket. Residues D50, 110 to 113, and 174 to 175 contribute to the ATP site; these read EGAG and NN. Residues D50 and E110 each contribute to the Mg(2+) site.

The protein belongs to the dethiobiotin synthetase family. Homodimer. Mg(2+) serves as cofactor.

Its subcellular location is the cytoplasm. It carries out the reaction (7R,8S)-7,8-diammoniononanoate + CO2 + ATP = (4R,5S)-dethiobiotin + ADP + phosphate + 3 H(+). Its pathway is cofactor biosynthesis; biotin biosynthesis; biotin from 7,8-diaminononanoate: step 1/2. Catalyzes a mechanistically unusual reaction, the ATP-dependent insertion of CO2 between the N7 and N8 nitrogen atoms of 7,8-diaminopelargonic acid (DAPA, also called 7,8-diammoniononanoate) to form a ureido ring. The polypeptide is ATP-dependent dethiobiotin synthetase BioD (Staphylococcus epidermidis (strain ATCC 35984 / DSM 28319 / BCRC 17069 / CCUG 31568 / BM 3577 / RP62A)).